Here is a 106-residue protein sequence, read N- to C-terminus: ATP-dependent Clp protease adapter protein ClpS (106 aa).

The protein belongs to the ClpS family. In terms of assembly, binds to the N-terminal domain of the chaperone ClpA.

In terms of biological role, involved in the modulation of the specificity of the ClpAP-mediated ATP-dependent protein degradation. The sequence is that of ATP-dependent Clp protease adapter protein ClpS from Escherichia fergusonii (strain ATCC 35469 / DSM 13698 / CCUG 18766 / IAM 14443 / JCM 21226 / LMG 7866 / NBRC 102419 / NCTC 12128 / CDC 0568-73).